The following is a 71-amino-acid chain: Small ribosomal subunit protein bS21 (71 aa).

Residues A50–K59 show a composition bias toward basic residues. Residues A50–Y71 are disordered. Residues V60 to Y71 are compositionally biased toward basic and acidic residues.

Belongs to the bacterial ribosomal protein bS21 family.

The chain is Small ribosomal subunit protein bS21 from Pseudomonas entomophila (strain L48).